Consider the following 207-residue polypeptide: 3-demethoxyubiquinol 3-hydroxylase (207 aa).

Fe cation contacts are provided by Glu-56, Glu-86, His-89, Glu-138, Glu-170, and His-173.

Belongs to the COQ7 family. Requires Fe cation as cofactor.

The protein localises to the cell membrane. It carries out the reaction a 5-methoxy-2-methyl-3-(all-trans-polyprenyl)benzene-1,4-diol + AH2 + O2 = a 3-demethylubiquinol + A + H2O. Its pathway is cofactor biosynthesis; ubiquinone biosynthesis. In terms of biological role, catalyzes the hydroxylation of 2-nonaprenyl-3-methyl-6-methoxy-1,4-benzoquinol during ubiquinone biosynthesis. This chain is 3-demethoxyubiquinol 3-hydroxylase, found in Cupriavidus necator (strain ATCC 17699 / DSM 428 / KCTC 22496 / NCIMB 10442 / H16 / Stanier 337) (Ralstonia eutropha).